The following is a 343-amino-acid chain: MPVYCKSQCGNRAVLRRPKTGDALCKECFFAAFEAEIHHTISSNQLFQPGQKIAVAASGGKDSTVLAHVLKLLNEKHNYGLDLVLLSIDEGISGYRDDSLETVKQNRDDYQMSLKILSYEELYGWTMDRIVAQIGRSNNCTFCGVFRRQALDRGAKLLQVDSIATGHNADDIAETVLMNILRGDTARLRRCTDIRTGGGEDSIPRVKPLKYSYEKDIVMYAHYKKLVYFSTECVFAPNAYRGHARAFLKDLEKVRPSVIMDIIYSGEQLRFKDTVKKPVRGTCSRCGFVSSQQPCKACVLLEGLNRGLPKLGIGKKSKGDRMIAEQNRELDLRERANLVKNDF.

It belongs to the TtcA family. CTU1/NCS6/ATPBD3 subfamily.

Its subcellular location is the cytoplasm. Its pathway is tRNA modification; 5-methoxycarbonylmethyl-2-thiouridine-tRNA biosynthesis. Plays a central role in 2-thiolation of mcm(5)S(2)U at tRNA wobble positions of tRNA(Lys), tRNA(Glu) and tRNA(Gln). Directly binds tRNAs and probably acts by catalyzing adenylation of tRNAs, an intermediate required for 2-thiolation. It is unclear whether it acts as a sulfurtransferase that transfers sulfur from thiocarboxylated URM1 onto the uridine of tRNAs at wobble position. In Drosophila willistoni (Fruit fly), this protein is Cytoplasmic tRNA 2-thiolation protein 1.